Here is a 315-residue protein sequence, read N- to C-terminus: Cytochrome c biogenesis protein CcsA (315 aa).

Transmembrane regions (helical) follow at residues 17-37 (LGFA…WAVA), 72-92 (ISNL…AQLF), 101-121 (IVSA…SFVL), 146-166 (VIMC…GVFL), 221-241 (SITA…VWAN), 255-272 (TWAL…HTRI), and 282-302 (AILA…VNLL).

Belongs to the CcmF/CycK/Ccl1/NrfE/CcsA family. In terms of assembly, may interact with ccs1.

The protein localises to the cellular thylakoid membrane. Functionally, required during biogenesis of c-type cytochromes (cytochrome c6 and cytochrome f) at the step of heme attachment. This Prochlorococcus marinus (strain NATL2A) protein is Cytochrome c biogenesis protein CcsA.